A 242-amino-acid polypeptide reads, in one-letter code: UPF0173 metal-dependent hydrolase APE_1117 (242 aa).

This sequence belongs to the UPF0173 family.

The sequence is that of UPF0173 metal-dependent hydrolase APE_1117 from Aeropyrum pernix (strain ATCC 700893 / DSM 11879 / JCM 9820 / NBRC 100138 / K1).